Consider the following 322-residue polypeptide: CXXC-type zinc finger protein 5 (322 aa).

The span at 1–10 (MSSLGGGSQD) shows a compositional bias: gly residues. Residues 1 to 100 (MSSLGGGSQD…SGGGSMMGGE (100 aa)) form a disordered region. Composition is skewed to low complexity over residues 11 to 20 (AGGSSSSSTN) and 28 to 52 (SGPK…VADD). Threonine 53 carries the phosphothreonine modification. The segment covering 87–97 (SSGGSGGGSMM) has biased composition (gly residues). A CXXC-type zinc finger spans residues 256–297 (GKKKRKRCGMCAPCRRRINCEQCSSCRNRKTGHQICKFRKCE). Positions 257–262 (KKKRKR) match the Nuclear localization signal motif. Zn(2+) contacts are provided by cysteine 263, cysteine 266, cysteine 269, cysteine 275, cysteine 278, cysteine 281, cysteine 291, and cysteine 296.

In terms of assembly, interacts with DVL1. Interacts with RBPJ.

The protein resides in the nucleus. It is found in the cytoplasm. Its function is as follows. May indirectly participate in activation of the NF-kappa-B and MAPK pathways. Acts as a mediator of BMP4-mediated modulation of canonical Wnt signaling activity in neural stem cells. Required for DNA damage-induced ATM phosphorylation, p53 activation and cell cycle arrest. Involved in myelopoiesis. Transcription factor. Binds to the oxygen responsive element of COX4I2 and represses its transcription under hypoxia conditions (4% oxygen), as well as normoxia conditions (20% oxygen). May repress COX4I2 transactivation induced by CHCHD2 and RBPJ. Binds preferentially to DNA containing cytidine-phosphate-guanosine (CpG) dinucleotides over CpH (H=A, T, and C), hemimethylated-CpG and hemimethylated-hydroxymethyl-CpG. The chain is CXXC-type zinc finger protein 5 (CXXC5) from Homo sapiens (Human).